The primary structure comprises 460 residues: Bifunctional protein GlmU (460 aa).

The pyrophosphorylase stretch occupies residues 1 to 232 (MALNVVILAA…AIEVEGANNR (232 aa)). UDP-N-acetyl-alpha-D-glucosamine-binding positions include 8–11 (LAAG), Lys22, Gln73, 78–79 (GT), 100–102 (YGD), Gly137, Glu157, Asn172, and Asn230. Asp102 provides a ligand contact to Mg(2+). Residue Asn230 coordinates Mg(2+). The interval 233–253 (VQLAQLERAYQAREAEKLMLA) is linker. Positions 254–460 (GANLRDPSRI…GWQRPVKIKK (207 aa)) are N-acetyltransferase. Residues Arg336 and Lys354 each contribute to the UDP-N-acetyl-alpha-D-glucosamine site. Residue His366 is the Proton acceptor of the active site. The UDP-N-acetyl-alpha-D-glucosamine site is built by Tyr369 and Asn380. Acetyl-CoA-binding positions include Ala383, 389 to 390 (NY), Ser408, Ala426, and Arg443.

In the N-terminal section; belongs to the N-acetylglucosamine-1-phosphate uridyltransferase family. This sequence in the C-terminal section; belongs to the transferase hexapeptide repeat family. As to quaternary structure, homotrimer. Mg(2+) is required as a cofactor.

The protein localises to the cytoplasm. The enzyme catalyses alpha-D-glucosamine 1-phosphate + acetyl-CoA = N-acetyl-alpha-D-glucosamine 1-phosphate + CoA + H(+). It carries out the reaction N-acetyl-alpha-D-glucosamine 1-phosphate + UTP + H(+) = UDP-N-acetyl-alpha-D-glucosamine + diphosphate. The protein operates within nucleotide-sugar biosynthesis; UDP-N-acetyl-alpha-D-glucosamine biosynthesis; N-acetyl-alpha-D-glucosamine 1-phosphate from alpha-D-glucosamine 6-phosphate (route II): step 2/2. It participates in nucleotide-sugar biosynthesis; UDP-N-acetyl-alpha-D-glucosamine biosynthesis; UDP-N-acetyl-alpha-D-glucosamine from N-acetyl-alpha-D-glucosamine 1-phosphate: step 1/1. It functions in the pathway bacterial outer membrane biogenesis; LPS lipid A biosynthesis. Functionally, catalyzes the last two sequential reactions in the de novo biosynthetic pathway for UDP-N-acetylglucosamine (UDP-GlcNAc). The C-terminal domain catalyzes the transfer of acetyl group from acetyl coenzyme A to glucosamine-1-phosphate (GlcN-1-P) to produce N-acetylglucosamine-1-phosphate (GlcNAc-1-P), which is converted into UDP-GlcNAc by the transfer of uridine 5-monophosphate (from uridine 5-triphosphate), a reaction catalyzed by the N-terminal domain. The chain is Bifunctional protein GlmU from Shewanella baltica (strain OS185).